A 369-amino-acid chain; its full sequence is Coproporphyrin III ferrochelatase (369 aa).

Fe-coproporphyrin III-binding residues include serine 61 and tyrosine 130. Fe(2+)-binding residues include histidine 197 and glutamate 286.

This sequence belongs to the ferrochelatase family.

It localises to the cytoplasm. It catalyses the reaction Fe-coproporphyrin III + 2 H(+) = coproporphyrin III + Fe(2+). Its pathway is porphyrin-containing compound metabolism; protoheme biosynthesis. Involved in coproporphyrin-dependent heme b biosynthesis. Catalyzes the insertion of ferrous iron into coproporphyrin III to form Fe-coproporphyrin III. The protein is Coproporphyrin III ferrochelatase of Corynebacterium diphtheriae (strain ATCC 700971 / NCTC 13129 / Biotype gravis).